Reading from the N-terminus, the 25-residue chain is Xenoposin precursor fragment BM2 (25 aa).

Expressed by the skin glands.

It is found in the secreted. Functionally, antimicrobial peptide. This Xenopus boumbaensis (Mawa clawed frog) protein is Xenoposin precursor fragment BM2.